The following is a 536-amino-acid chain: MIRTTFATAIAHFHTHSHGGAQARPLQNNTREVIHCPEAWLVKIVSTLFVYRVPDSDLCFCYLSKNLNPFISFEVVKKLDNNPHIGFRFWEFSRFKLNIRHSFWTYNLLTRSLCKAGLHDLAGQMFECMKSDGVSPNNRLLGFLVSSFAEKGKLHFATALLLQSFEVEGCCMVVNSLLNTLVKLDRVEDAMKLFDEHLRFQSCNDTKTFNILIRGLCGVGKAEKALELLGVMSGFGCEPDIVTYNTLIQGFCKSNELNKASEMFKDVKSGSVCSPDVVTYTSMISGYCKAGKMREASSLLDDMLRLGIYPTNVTFNVLVDGYAKAGEMLTAEEIRGKMISFGCFPDVVTFTSLIDGYCRVGQVSQGFRLWEEMNARGMFPNAFTYSILINALCNENRLLKARELLGQLASKDIIPQPFMYNPVIDGFCKAGKVNEANVIVEEMEKKKCKPDKITFTILIIGHCMKGRMFEAVSIFHKMVAIGCSPDKITVSSLLSCLLKAGMAKEAYHLNQIARKGQSNNVVPLETKTANATLAAC.

PPR repeat units lie at residues 102–136 (SFWT…GVSP), 137–167 (NNRL…SFEV), 170–200 (CCMV…HLRF), 205–239 (DTKT…GCEP), 240–274 (DIVT…SVCS), 276–310 (DVVT…GIYP), 311–345 (TNVT…GCFP), 346–380 (DVVT…GMFP), 381–415 (NAFT…DIIP), 416–450 (QPFM…KCKP), 451–485 (DKIT…GCSP), and 486–523 (DKIT…NVVP).

This sequence belongs to the PPR family. P subfamily.

The chain is Pentatricopeptide repeat-containing protein At2g06000 from Arabidopsis thaliana (Mouse-ear cress).